The chain runs to 109 residues: Prothymosin alpha (109 aa).

A disordered region spans residues 1–109; sequence MSDTSVDASV…AKKQKTDDDD (109 aa). Basic and acidic residues predominate over residues 9 to 35; the sequence is SVEKTTKDLKSKDKELVEETENGKDKP. Acidic residues predominate over residues 41-81; the sequence is ENEENGEDGADNEEEEEVDEEDEEDEGEGDDDEGDEDDEAD. Residues 99 to 109 show a composition bias toward basic and acidic residues; the sequence is DAKKQKTDDDD.

Belongs to the pro/parathymosin family. As to expression, highly expressed in the testis.

It is found in the nucleus. In terms of biological role, may have role in testicular activity. This Pelophylax lessonae (Pool frog) protein is Prothymosin alpha.